Consider the following 246-residue polypeptide: NAD(P)H-quinone oxidoreductase subunit K, organellar chromatophore (246 aa).

[4Fe-4S] cluster contacts are provided by C58, C59, C123, and C154.

It belongs to the complex I 20 kDa subunit family. In terms of assembly, NDH-1 is composed of 14 different subunits. Subunits nuoB, C, D, E, F, and G constitute the peripheral sector of the complex. The cofactor is [4Fe-4S] cluster.

The protein resides in the plastid. It localises to the organellar chromatophore thylakoid membrane. It carries out the reaction a quinone + NADH + H(+) = a quinol + NAD(+). Its function is as follows. NDH-1 shuttles electrons from NADH, via FMN and iron-sulfur (Fe-S) centers, to quinones in the respiratory chain. Couples the redox reaction to proton translocation (for every two electrons transferred, four hydrogen ions are translocated across the cytoplasmic membrane), and thus conserves the redox energy in a proton gradient. The sequence is that of NAD(P)H-quinone oxidoreductase subunit K, organellar chromatophore from Paulinella chromatophora.